The sequence spans 264 residues: Exosome complex component Rrp4 (264 aa).

The S1 motif domain occupies 65–137; the sequence is GDNVLGKIVD…EVNNIELTTK (73 aa). The region spanning 147–206 is the KH domain; that stretch reads RGGQIIKITSSKVPRVIGKGGSMINMIKKLTQSRIIVGQNGWIWISSKNPELEKLAIEAI. Over residues 244 to 258 the composition is skewed to acidic residues; the sequence is SLEEETQEETVMEND. The interval 244–264 is disordered; that stretch reads SLEEETQEETVMENDVEARGP.

It belongs to the RRP4 family. Component of the archaeal exosome complex. Forms a trimer of Rrp4 and/or Csl4 subunits. The trimer associates with a hexameric ring-like arrangement composed of 3 Rrp41-Rrp42 heterodimers.

It localises to the cytoplasm. Functionally, non-catalytic component of the exosome, which is a complex involved in RNA degradation. Increases the RNA binding and the efficiency of RNA degradation. Confers strong poly(A) specificity to the exosome. This Pyrococcus furiosus (strain ATCC 43587 / DSM 3638 / JCM 8422 / Vc1) protein is Exosome complex component Rrp4.